The primary structure comprises 776 residues: Isoamylase (776 aa).

An N-terminal signal peptide occupies residues Met-1–Ala-26. Positions 154, 255, 256, 258, and 285 each coordinate Ca(2+). The active-site Nucleophile is the Asp-401. A disulfide bridge links Cys-410 with Cys-422. Glu-461 acts as the Proton donor in catalysis. 2 disulfides stabilise this stretch: Cys-546/Cys-616 and Cys-738/Cys-766.

The protein belongs to the glycosyl hydrolase 13 family. In terms of assembly, monomer. The cofactor is Ca(2+).

The catalysed reaction is Hydrolysis of (1-&gt;6)-alpha-D-glucosidic branch linkages in glycogen, amylopectin and their beta-limit dextrins.. The chain is Isoamylase (iam) from Pseudomonas sp. (strain SMP1).